A 29-amino-acid polypeptide reads, in one-letter code: VNEPADXXARFTYDXYGLXVVGLIVAAVL.

This sequence belongs to the FXYD family. In terms of processing, phosphorylated by protein kinase C.

It is found in the membrane. In terms of biological role, induces a hyperpolarization-activated chloride current when expressed in Xenopus oocytes. This chain is Phospholemman-like protein, found in Scyliorhinus canicula (Small-spotted catshark).